The sequence spans 105 residues: Large ribosomal subunit protein uL24 (105 aa).

Belongs to the universal ribosomal protein uL24 family. As to quaternary structure, part of the 50S ribosomal subunit.

Its function is as follows. One of two assembly initiator proteins, it binds directly to the 5'-end of the 23S rRNA, where it nucleates assembly of the 50S subunit. One of the proteins that surrounds the polypeptide exit tunnel on the outside of the subunit. The sequence is that of Large ribosomal subunit protein uL24 from Vibrio parahaemolyticus serotype O3:K6 (strain RIMD 2210633).